A 358-amino-acid polypeptide reads, in one-letter code: Trans-enoyl reductase pvhC (358 aa).

48 to 51 (VDSK) is an NADP(+) binding site. A substrate-binding site is contributed by 134 to 141 (ISFLTSGL). NADP(+)-binding positions include 169–172 (SSSC), 192–195 (SPHN), tyrosine 210, and 257–258 (LE). Residue 278–282 (GPSLL) coordinates substrate. 347–348 (VS) contributes to the NADP(+) binding site.

This sequence belongs to the zinc-containing alcohol dehydrogenase family. In terms of assembly, monomer.

It functions in the pathway secondary metabolite biosynthesis. In terms of biological role, trans-enoyl reductase; part of the gene cluster that mediates the biosynthesis of varicidin A, an antifungal natural product containing a cis-octahydrodecalin core. The PKS module of pvhA together with the enoylreductase pvhC catalyze the formation of the polyketide unit which is then conjugated to L-isoleucine by the condensation domain of the NRPS module. Activity of the Dieckmann cyclase domain (RED) of pvhA results in release of an acyclic tetramate. The cytochrome P450 monooxygenase pvhE then catalyzes the oxidation of the C21 methyl group to a to carboxylate group. The methyltransferase pvhD then further methylates the pvhE product. The Diels-Alderase pvhB is able to catalyze Diels-Alder cycloaddition using both pvhE and pvhD products as substrates to form the decalin ring, yielding varicidin B and A, respectively. This Talaromyces variabilis (Penicillium variabile) protein is Trans-enoyl reductase pvhC.